The chain runs to 413 residues: MNAVEEIGKRAKLVTSDVANLAVDIRNQILLDMSSALVANWQEIVAANKKDLDAATQLSGPMRNRLTLDQKTIGGIAASLSAVAKLADPLAGPYDNWKNHTGFKIVKKTVPLGVVAMIFEARPNVTVDAAALTFKSGNAVILRGGKEAIESNIILTNILRNVLRKHNLNPDIIQLITDTTHDSVNTLLNLRDYVDVLIPRGSGQFIDFVVKNATVPVIETGAGNTHIFVDESAKQDEAIRVIHNAKTQKPAVCNAAEKLLIHEAIAGEFLPKIVDDLLAAGVELRGDQKARSIDSRVIGASAEDWDTEYNDLIMAIKIVHNNDEAITWINDHTTHHSETIISEDLNHVTDFMNTVDAAVVYQNVSSRFTDGFEFGFGAEIGISTQKLHARGPMGLSALTTIKYEVFGEGQIRE.

This sequence belongs to the gamma-glutamyl phosphate reductase family.

It is found in the cytoplasm. It carries out the reaction L-glutamate 5-semialdehyde + phosphate + NADP(+) = L-glutamyl 5-phosphate + NADPH + H(+). It functions in the pathway amino-acid biosynthesis; L-proline biosynthesis; L-glutamate 5-semialdehyde from L-glutamate: step 2/2. In terms of biological role, catalyzes the NADPH-dependent reduction of L-glutamate 5-phosphate into L-glutamate 5-semialdehyde and phosphate. The product spontaneously undergoes cyclization to form 1-pyrroline-5-carboxylate. This Leuconostoc mesenteroides subsp. mesenteroides (strain ATCC 8293 / DSM 20343 / BCRC 11652 / CCM 1803 / JCM 6124 / NCDO 523 / NBRC 100496 / NCIMB 8023 / NCTC 12954 / NRRL B-1118 / 37Y) protein is Gamma-glutamyl phosphate reductase.